The following is a 317-amino-acid chain: Acetyl-coenzyme A carboxylase carboxyl transferase subunit alpha (317 aa).

The CoA carboxyltransferase C-terminal domain occupies 40–293; it reads LEGRVRDAMV…EAVIGDALKE (254 aa).

It belongs to the AccA family. As to quaternary structure, acetyl-CoA carboxylase is a heterohexamer composed of biotin carboxyl carrier protein (AccB), biotin carboxylase (AccC) and two subunits each of ACCase subunit alpha (AccA) and ACCase subunit beta (AccD).

The protein localises to the cytoplasm. It catalyses the reaction N(6)-carboxybiotinyl-L-lysyl-[protein] + acetyl-CoA = N(6)-biotinyl-L-lysyl-[protein] + malonyl-CoA. It functions in the pathway lipid metabolism; malonyl-CoA biosynthesis; malonyl-CoA from acetyl-CoA: step 1/1. In terms of biological role, component of the acetyl coenzyme A carboxylase (ACC) complex. First, biotin carboxylase catalyzes the carboxylation of biotin on its carrier protein (BCCP) and then the CO(2) group is transferred by the carboxyltransferase to acetyl-CoA to form malonyl-CoA. The polypeptide is Acetyl-coenzyme A carboxylase carboxyl transferase subunit alpha (Sinorhizobium medicae (strain WSM419) (Ensifer medicae)).